A 547-amino-acid polypeptide reads, in one-letter code: T-complex protein 1 subunit gamma (547 aa).

Position 41 (Gly-41) interacts with ADP. Gly-41 serves as a coordination point for ATP. Residue Asp-92 participates in Mg(2+) binding. Gly-93, Thr-94, Thr-95, Ser-96, Thr-161, and Lys-162 together coordinate ADP. The ATP site is built by Gly-93, Thr-94, and Thr-95. Cys-365 and Cys-371 are joined by a disulfide. Positions 410, 481, 482, 496, and 501 each coordinate ADP. ATP-binding residues include Gly-410 and Gly-481. Residue Glu-496 coordinates ATP. Positions 525 to 534 are enriched in basic and acidic residues; sequence HKKKGEDHGR. Positions 525–547 are disordered; it reads HKKKGEDHGRQPAAAPEAPQQAE. Low complexity predominate over residues 535–547; sequence QPAAAPEAPQQAE.

The protein belongs to the TCP-1 chaperonin family. As to quaternary structure, component of the chaperonin-containing T-complex (TRiC), a hexadecamer composed of two identical back-to-back stacked rings enclosing a protein folding chamber. Each ring is made up of eight different subunits: TCP1/CCT1, CCT2, CCT3, CCT4, CCT5, CCT6A/CCT6, CCT7, CCT8.

It is found in the cytoplasm. The enzyme catalyses ATP + H2O = ADP + phosphate + H(+). Functionally, component of the chaperonin-containing T-complex (TRiC), a molecular chaperone complex that assists the folding of actin, tubulin and other proteins upon ATP hydrolysis. The chain is T-complex protein 1 subunit gamma (cct3) from Xenopus laevis (African clawed frog).